The chain runs to 403 residues: CCA-adding enzyme (403 aa).

2 residues coordinate ATP: glycine 32 and arginine 35. 2 residues coordinate CTP: glycine 32 and arginine 35. Positions 45 and 47 each coordinate Mg(2+). Residues arginine 116, aspartate 159, arginine 162, arginine 165, and arginine 168 each contribute to the ATP site. Residues arginine 116, aspartate 159, arginine 162, arginine 165, and arginine 168 each contribute to the CTP site.

The protein belongs to the tRNA nucleotidyltransferase/poly(A) polymerase family. Bacterial CCA-adding enzyme type 3 subfamily. As to quaternary structure, homodimer. Mg(2+) is required as a cofactor.

The catalysed reaction is a tRNA precursor + 2 CTP + ATP = a tRNA with a 3' CCA end + 3 diphosphate. It catalyses the reaction a tRNA with a 3' CCA end + 2 CTP + ATP = a tRNA with a 3' CCACCA end + 3 diphosphate. Its function is as follows. Catalyzes the addition and repair of the essential 3'-terminal CCA sequence in tRNAs without using a nucleic acid template. Adds these three nucleotides in the order of C, C, and A to the tRNA nucleotide-73, using CTP and ATP as substrates and producing inorganic pyrophosphate. tRNA 3'-terminal CCA addition is required both for tRNA processing and repair. Also involved in tRNA surveillance by mediating tandem CCA addition to generate a CCACCA at the 3' terminus of unstable tRNAs. While stable tRNAs receive only 3'-terminal CCA, unstable tRNAs are marked with CCACCA and rapidly degraded. This Streptococcus suis (strain 98HAH33) protein is CCA-adding enzyme.